A 747-amino-acid chain; its full sequence is Protein TraI (747 aa).

2 disordered regions span residues 510–594 (LNKE…PQSQ) and 624–652 (VEQQ…TPPG). A compositionally biased stretch (basic and acidic residues) spans 513–526 (ENTHERTERPEHRG). The span at 537–562 (QRPAADQHATGAAAVARAGDGRPAAG) shows a compositional bias: low complexity.

Its function is as follows. The initiation process of transfer DNA synthesis requires the interaction of at least three plasmid-specific components (TraH, TraI, and TraJ) at the transfer origin resulting in the assembly of a specialized nucleoprotein complex - the relaxosome. Site and strand specific cleavage at the transfer origin is dependent on TraI and TraJ. The sequence is that of Protein TraI (traI) from Escherichia coli.